Reading from the N-terminus, the 50-residue chain is Large ribosomal subunit protein bL33B (50 aa).

Belongs to the bacterial ribosomal protein bL33 family.

The polypeptide is Large ribosomal subunit protein bL33B (Ligilactobacillus salivarius (strain UCC118) (Lactobacillus salivarius)).